Reading from the N-terminus, the 103-residue chain is Large ribosomal subunit protein uL24 (103 aa).

This sequence belongs to the universal ribosomal protein uL24 family. As to quaternary structure, part of the 50S ribosomal subunit.

Its function is as follows. One of two assembly initiator proteins, it binds directly to the 5'-end of the 23S rRNA, where it nucleates assembly of the 50S subunit. One of the proteins that surrounds the polypeptide exit tunnel on the outside of the subunit. In Brucella ovis (strain ATCC 25840 / 63/290 / NCTC 10512), this protein is Large ribosomal subunit protein uL24.